Reading from the N-terminus, the 186-residue chain is Peptide deformylase (186 aa).

Residues Cys94 and His136 each coordinate Fe cation. Glu137 is a catalytic residue. His140 provides a ligand contact to Fe cation.

The protein belongs to the polypeptide deformylase family. Requires Fe(2+) as cofactor.

It catalyses the reaction N-terminal N-formyl-L-methionyl-[peptide] + H2O = N-terminal L-methionyl-[peptide] + formate. In terms of biological role, removes the formyl group from the N-terminal Met of newly synthesized proteins. Requires at least a dipeptide for an efficient rate of reaction. N-terminal L-methionine is a prerequisite for activity but the enzyme has broad specificity at other positions. The sequence is that of Peptide deformylase from Prosthecochloris aestuarii (strain DSM 271 / SK 413).